The chain runs to 437 residues: tRNA modification GTPase MnmE (437 aa).

Residues Arg-21, Glu-79, and Arg-119 each contribute to the (6S)-5-formyl-5,6,7,8-tetrahydrofolate site. The TrmE-type G domain occupies 223–364 (GFRVVLAGPP…FRSALIAHAR (142 aa)). Residues 233 to 238 (NAGKST), 252 to 258 (AAEPGTT), and 277 to 280 (DTAG) each bind GTP. Mg(2+) contacts are provided by Ser-237 and Thr-258. Lys-437 serves as a coordination point for (6S)-5-formyl-5,6,7,8-tetrahydrofolate.

It belongs to the TRAFAC class TrmE-Era-EngA-EngB-Septin-like GTPase superfamily. TrmE GTPase family. As to quaternary structure, homodimer. Heterotetramer of two MnmE and two MnmG subunits. The cofactor is K(+).

It is found in the cytoplasm. Functionally, exhibits a very high intrinsic GTPase hydrolysis rate. Involved in the addition of a carboxymethylaminomethyl (cmnm) group at the wobble position (U34) of certain tRNAs, forming tRNA-cmnm(5)s(2)U34. The chain is tRNA modification GTPase MnmE from Novosphingobium aromaticivorans (strain ATCC 700278 / DSM 12444 / CCUG 56034 / CIP 105152 / NBRC 16084 / F199).